A 341-amino-acid chain; its full sequence is L-threonine 3-dehydrogenase (341 aa).

Cys38 lines the Zn(2+) pocket. Catalysis depends on charge relay system residues Thr40 and His43. 6 residues coordinate Zn(2+): His63, Glu64, Cys93, Cys96, Cys99, and Cys107. NAD(+)-binding positions include Ile175, Asp195, Arg200, 262-264, and 286-287; these read LGI and IY.

Belongs to the zinc-containing alcohol dehydrogenase family. In terms of assembly, homotetramer. Zn(2+) is required as a cofactor.

The protein localises to the cytoplasm. The catalysed reaction is L-threonine + NAD(+) = (2S)-2-amino-3-oxobutanoate + NADH + H(+). It functions in the pathway amino-acid degradation; L-threonine degradation via oxydo-reductase pathway; glycine from L-threonine: step 1/2. Its function is as follows. Catalyzes the NAD(+)-dependent oxidation of L-threonine to 2-amino-3-ketobutyrate. This Shewanella halifaxensis (strain HAW-EB4) protein is L-threonine 3-dehydrogenase.